The primary structure comprises 111 residues: Probable 4-amino-4-deoxy-L-arabinose-phosphoundecaprenol flippase subunit ArnE (111 aa).

3 consecutive transmembrane segments (helical) span residues 38–58 (LWLGLALICMGAAMVLWLLVL), 61–81 (LPVGIAYPMLSLNFVWVTLAA), and 89–109 (VLPRHWLGVALIISGIIILGS). An EamA domain is found at 40 to 109 (LGLALICMGA…IISGIIILGS (70 aa)).

The protein belongs to the ArnE family. In terms of assembly, heterodimer of ArnE and ArnF.

It is found in the cell inner membrane. Its pathway is bacterial outer membrane biogenesis; lipopolysaccharide biosynthesis. In terms of biological role, translocates 4-amino-4-deoxy-L-arabinose-phosphoundecaprenol (alpha-L-Ara4N-phosphoundecaprenol) from the cytoplasmic to the periplasmic side of the inner membrane. The protein is Probable 4-amino-4-deoxy-L-arabinose-phosphoundecaprenol flippase subunit ArnE of Salmonella paratyphi A (strain ATCC 9150 / SARB42).